Reading from the N-terminus, the 338-residue chain is Glycerol-3-phosphate dehydrogenase [NAD(P)+] (338 aa).

NADPH is bound by residues Ser-11, Trp-12, His-32, His-33, and Lys-109. Positions 109, 140, and 142 each coordinate sn-glycerol 3-phosphate. Position 144 (Ala-144) interacts with NADPH. Residues Lys-195, Asp-248, Ser-258, Arg-259, and Asn-260 each contribute to the sn-glycerol 3-phosphate site. Residue Lys-195 is the Proton acceptor of the active site. Arg-259 lines the NADPH pocket. Residues Val-283 and Glu-285 each contribute to the NADPH site.

The protein belongs to the NAD-dependent glycerol-3-phosphate dehydrogenase family.

The protein resides in the cytoplasm. The catalysed reaction is sn-glycerol 3-phosphate + NAD(+) = dihydroxyacetone phosphate + NADH + H(+). It catalyses the reaction sn-glycerol 3-phosphate + NADP(+) = dihydroxyacetone phosphate + NADPH + H(+). The protein operates within membrane lipid metabolism; glycerophospholipid metabolism. Its function is as follows. Catalyzes the reduction of the glycolytic intermediate dihydroxyacetone phosphate (DHAP) to sn-glycerol 3-phosphate (G3P), the key precursor for phospholipid synthesis. In Leuconostoc citreum (strain KM20), this protein is Glycerol-3-phosphate dehydrogenase [NAD(P)+].